A 148-amino-acid chain; its full sequence is Large ribosomal subunit protein bL9 (148 aa).

It belongs to the bacterial ribosomal protein bL9 family.

Its function is as follows. Binds to the 23S rRNA. This Oceanobacillus iheyensis (strain DSM 14371 / CIP 107618 / JCM 11309 / KCTC 3954 / HTE831) protein is Large ribosomal subunit protein bL9.